We begin with the raw amino-acid sequence, 131 residues long: uncharacterized protein (131 aa).

Transmembrane regions (helical) follow at residues 68–88 and 94–114; these read VVRA…VAPI and VLGA…IVAI.

Its subcellular location is the cell membrane. This is an uncharacterized protein from Methanocaldococcus jannaschii (strain ATCC 43067 / DSM 2661 / JAL-1 / JCM 10045 / NBRC 100440) (Methanococcus jannaschii).